The following is a 222-amino-acid chain: Small ribosomal subunit protein uS3 (222 aa).

The 70-residue stretch at 39 to 108 folds into the KH type-2 domain; sequence IRRHIKEKLY…TISLDIKEIK (70 aa).

This sequence belongs to the universal ribosomal protein uS3 family. In terms of assembly, part of the 30S ribosomal subunit. Forms a tight complex with proteins S10 and S14.

In terms of biological role, binds the lower part of the 30S subunit head. Binds mRNA in the 70S ribosome, positioning it for translation. The polypeptide is Small ribosomal subunit protein uS3 (Caldicellulosiruptor saccharolyticus (strain ATCC 43494 / DSM 8903 / Tp8T 6331)).